The sequence spans 447 residues: Argininosuccinate synthase (447 aa).

ATP-binding positions include 17–25 (AFSGGLDTS) and A43. L-citrulline is bound at residue Y99. ATP is bound by residues G129 and T131. Positions 131, 135, and 136 each coordinate L-aspartate. N135 is a binding site for L-citrulline. Residue D136 coordinates ATP. L-citrulline contacts are provided by R139 and S192. An ATP-binding site is contributed by D194. L-citrulline-binding residues include T201, E203, and E280.

It belongs to the argininosuccinate synthase family. Type 2 subfamily. As to quaternary structure, homotetramer.

The protein localises to the cytoplasm. It catalyses the reaction L-citrulline + L-aspartate + ATP = 2-(N(omega)-L-arginino)succinate + AMP + diphosphate + H(+). The protein operates within amino-acid biosynthesis; L-arginine biosynthesis; L-arginine from L-ornithine and carbamoyl phosphate: step 2/3. This is Argininosuccinate synthase from Escherichia coli O9:H4 (strain HS).